Consider the following 673-residue polypeptide: DNA ligase (673 aa).

Residues 34 to 38, 83 to 84, and glutamate 116 contribute to the NAD(+) site; these read DAEYD and SL. Lysine 118 serves as the catalytic N6-AMP-lysine intermediate. Positions 139, 176, 293, and 317 each coordinate NAD(+). The Zn(2+) site is built by cysteine 411, cysteine 414, cysteine 429, and cysteine 435. Residues 595–673 form the BRCT domain; it reads NQQNPFFGKT…EDEFLKWVNS (79 aa).

This sequence belongs to the NAD-dependent DNA ligase family. LigA subfamily. Mg(2+) serves as cofactor. Requires Mn(2+) as cofactor.

It catalyses the reaction NAD(+) + (deoxyribonucleotide)n-3'-hydroxyl + 5'-phospho-(deoxyribonucleotide)m = (deoxyribonucleotide)n+m + AMP + beta-nicotinamide D-nucleotide.. DNA ligase that catalyzes the formation of phosphodiester linkages between 5'-phosphoryl and 3'-hydroxyl groups in double-stranded DNA using NAD as a coenzyme and as the energy source for the reaction. It is essential for DNA replication and repair of damaged DNA. This is DNA ligase from Legionella pneumophila (strain Lens).